The primary structure comprises 466 residues: tRNA modification GTPase MnmE (466 aa).

Residues Arg-25, Glu-82, and Lys-127 each contribute to the (6S)-5-formyl-5,6,7,8-tetrahydrofolate site. Residues 223–388 (GIKVVIAGQP…LRRQLLQIAG (166 aa)) form the TrmE-type G domain. Asn-233 is a binding site for K(+). Residues 233-238 (NAGKSS), 252-258 (TPIAGTT), 277-280 (DTAG), 346-349 (NKAD), and 369-371 (SAR) each bind GTP. Residue Ser-237 coordinates Mg(2+). Positions 252, 254, and 257 each coordinate K(+). Thr-258 contacts Mg(2+). (6S)-5-formyl-5,6,7,8-tetrahydrofolate is bound at residue Lys-466.

The protein belongs to the TRAFAC class TrmE-Era-EngA-EngB-Septin-like GTPase superfamily. TrmE GTPase family. Homodimer. Heterotetramer of two MnmE and two MnmG subunits. It depends on K(+) as a cofactor.

The protein resides in the cytoplasm. Functionally, exhibits a very high intrinsic GTPase hydrolysis rate. Involved in the addition of a carboxymethylaminomethyl (cmnm) group at the wobble position (U34) of certain tRNAs, forming tRNA-cmnm(5)s(2)U34. The chain is tRNA modification GTPase MnmE from Acidovorax sp. (strain JS42).